A 119-amino-acid chain; its full sequence is DNA-directed RNA polymerase subunit omega (119 aa).

It belongs to the RNA polymerase subunit omega family. As to quaternary structure, the RNAP catalytic core consists of 2 alpha, 1 beta, 1 beta' and 1 omega subunit. When a sigma factor is associated with the core the holoenzyme is formed, which can initiate transcription.

It carries out the reaction RNA(n) + a ribonucleoside 5'-triphosphate = RNA(n+1) + diphosphate. Promotes RNA polymerase assembly. Latches the N- and C-terminal regions of the beta' subunit thereby facilitating its interaction with the beta and alpha subunits. The sequence is that of DNA-directed RNA polymerase subunit omega from Caulobacter sp. (strain K31).